Reading from the N-terminus, the 153-residue chain is 6,7-dimethyl-8-ribityllumazine synthase (153 aa).

5-amino-6-(D-ribitylamino)uracil-binding positions include Phe21, 55-57 (AFE), and 79-81 (TVI). 84–85 (AT) serves as a coordination point for (2S)-2-hydroxy-3-oxobutyl phosphate. His87 serves as the catalytic Proton donor. Phe112 is a 5-amino-6-(D-ribitylamino)uracil binding site. Residue Arg126 coordinates (2S)-2-hydroxy-3-oxobutyl phosphate.

This sequence belongs to the DMRL synthase family. In terms of assembly, forms an icosahedral capsid composed of 60 subunits, arranged as a dodecamer of pentamers.

It carries out the reaction (2S)-2-hydroxy-3-oxobutyl phosphate + 5-amino-6-(D-ribitylamino)uracil = 6,7-dimethyl-8-(1-D-ribityl)lumazine + phosphate + 2 H2O + H(+). Its pathway is cofactor biosynthesis; riboflavin biosynthesis; riboflavin from 2-hydroxy-3-oxobutyl phosphate and 5-amino-6-(D-ribitylamino)uracil: step 1/2. Functionally, catalyzes the formation of 6,7-dimethyl-8-ribityllumazine by condensation of 5-amino-6-(D-ribitylamino)uracil with 3,4-dihydroxy-2-butanone 4-phosphate. This is the penultimate step in the biosynthesis of riboflavin. This chain is 6,7-dimethyl-8-ribityllumazine synthase, found in Bacillus cereus (strain G9842).